The following is a 366-amino-acid chain: Isocitrate dehydrogenase [NAD] subunit alpha, mitochondrial (366 aa).

A mitochondrion-targeting transit peptide spans 1 to 27; sequence MAGPAWISKVSRLLGAFHNPKQVTRGF. Lysine 77 carries the N6-succinyllysine modification. Threonine 101 is modified (phosphothreonine). Positions 115, 125, and 146 each coordinate substrate. Lysine 223 carries the N6-acetyllysine modification. Mg(2+) contacts are provided by aspartate 233, aspartate 257, and aspartate 261. Lysine 343 bears the N6-acetyllysine; alternate mark. Lysine 343 is subject to N6-succinyllysine; alternate. Lysine 350 bears the N6-succinyllysine mark.

This sequence belongs to the isocitrate and isopropylmalate dehydrogenases family. Heterooligomer of subunits alpha (IDH3A), beta (IDH3B), and gamma (IDH3G) in the apparent ratio of 2:1:1. The heterodimer containing one IDH3A and one IDH3B subunit and the heterodimer containing one IDH3A and one IDH3G subunit assemble into a heterotetramer (which contains two subunits of IDH3A, one of IDH3B and one of IDH3G) and further into the heterooctamer. The cofactor is Mg(2+). Requires Mn(2+) as cofactor.

Its subcellular location is the mitochondrion. It carries out the reaction D-threo-isocitrate + NAD(+) = 2-oxoglutarate + CO2 + NADH. Its activity is regulated as follows. The heterotetramer and the heterodimer composed of IDH3A and IDH3G subunits can be allosterically activated by citrate (CIT) or/and ADP, and the two activators can act independently or synergistically. The heterodimer composed of IDH3A and IDH3B subunits cannot be allosterically regulated and the allosteric regulation of the heterotetramer is through the IDH3G subunit and not the IDH3B subunit. The IDH3G subunit contains the allosteric site which consists of a CIT-binding site and an ADP-binding site, and the binding of CIT and ADP causes conformational changes at the allosteric site which are transmitted to the active site in the catalytic subunit (IDH3A) through a cascade of conformational changes at the heterodimer interface, leading to stabilization of the isocitrate-binding at the active site and thus activation of the enzyme. ATP can activate the heterotetramer and the heterodimer composed of IDH3A and IDH3G subunits at low concentrations but inhibits their activities at high concentrations, whereas ATP exhibits only inhibitory effect on the heterodimer composed of IDH3A and IDH3B subunits. Catalytic subunit of the enzyme which catalyzes the decarboxylation of isocitrate (ICT) into alpha-ketoglutarate. The heterodimer composed of the alpha (IDH3A) and beta (IDH3B) subunits and the heterodimer composed of the alpha (IDH3A) and gamma (IDH3G) subunits, have considerable basal activity but the full activity of the heterotetramer (containing two subunits of IDH3A, one of IDH3B and one of IDH3G) requires the assembly and cooperative function of both heterodimers. The polypeptide is Isocitrate dehydrogenase [NAD] subunit alpha, mitochondrial (Homo sapiens (Human)).